A 276-amino-acid polypeptide reads, in one-letter code: ATP synthase subunit a (276 aa).

Transmembrane regions (helical) follow at residues 47-67, 107-127, 152-172, 188-208, 226-246, and 247-267; these read WHID…WLFY, IAPL…MDLI, DLNV…FYSI, PFNH…TLVA, LIFI…SVPW, and AIFH…LTIV.

It belongs to the ATPase A chain family. F-type ATPases have 2 components, CF(1) - the catalytic core - and CF(0) - the membrane proton channel. CF(1) has five subunits: alpha(3), beta(3), gamma(1), delta(1), epsilon(1). CF(0) has three main subunits: a(1), b(2) and c(9-12). The alpha and beta chains form an alternating ring which encloses part of the gamma chain. CF(1) is attached to CF(0) by a central stalk formed by the gamma and epsilon chains, while a peripheral stalk is formed by the delta and b chains.

The protein localises to the cell inner membrane. In terms of biological role, key component of the proton channel; it plays a direct role in the translocation of protons across the membrane. The sequence is that of ATP synthase subunit a from Shewanella pealeana (strain ATCC 700345 / ANG-SQ1).